A 471-amino-acid polypeptide reads, in one-letter code: Variant surface glycoprotein ILTAT 1.1BC (471 aa).

Residues 1–21 (MVKAIASLMLLHIWAIEEIKA) form the signal peptide. Residue N130 is glycosylated (N-linked (GlcNAc...) asparagine). Over residues 158-168 (TVSKTTECNTE) the composition is skewed to polar residues. Disordered regions lie at residues 158-183 (TVSK…TLSK) and 204-232 (GGAC…TTAS). Basic and acidic residues predominate over residues 214-226 (DKIHITNETDSKN). N-linked (GlcNAc...) asparagine glycans are attached at residues N220 and N260. 2 cysteine pairs are disulfide-bonded: C397-C410 and C406-C421. Positions 432–454 (AEQAATNQETEGKDGKTTNTTGS) are disordered. Residue N450 is glycosylated (N-linked (GlcNAc...) asparagine). Residue S454 is the site of GPI-anchor amidated serine attachment. The propeptide at 455–471 (NSFLINKAPVLLAFLLL) is removed in mature form.

The protein resides in the cell membrane. Functionally, VSG forms a coat on the surface of the parasite. The trypanosome evades the immune response of the host by expressing a series of antigenically distinct VSGs from an estimated 1000 VSG genes. The polypeptide is Variant surface glycoprotein ILTAT 1.1BC (Trypanosoma brucei brucei).